Here is a 106-residue protein sequence, read N- to C-terminus: Acylphosphatase-2 (106 aa).

The Acylphosphatase-like domain occupies 16-106 (SVDYEVFGTV…LEYSDFSIRY (91 aa)). Residues arginine 31 and asparagine 49 contribute to the active site. Serine 100 bears the Phosphoserine mark.

This sequence belongs to the acylphosphatase family.

The enzyme catalyses an acyl phosphate + H2O = a carboxylate + phosphate + H(+). The protein is Acylphosphatase-2 (Acyp2) of Mus musculus (Mouse).